The following is a 223-amino-acid chain: Triosephosphate isomerase (223 aa).

10–12 (NFK) is a substrate binding site. The Electrophile role is filled by histidine 94. Glutamate 142 serves as the catalytic Proton acceptor. Substrate-binding positions include isoleucine 147, glycine 182, and 203–204 (AS).

Belongs to the triosephosphate isomerase family. Homotetramer; dimer of dimers.

The protein resides in the cytoplasm. The enzyme catalyses D-glyceraldehyde 3-phosphate = dihydroxyacetone phosphate. The protein operates within carbohydrate biosynthesis; gluconeogenesis. It participates in carbohydrate degradation; glycolysis; D-glyceraldehyde 3-phosphate from glycerone phosphate: step 1/1. Functionally, involved in the gluconeogenesis. Catalyzes stereospecifically the conversion of dihydroxyacetone phosphate (DHAP) to D-glyceraldehyde-3-phosphate (G3P). This Archaeoglobus fulgidus (strain ATCC 49558 / DSM 4304 / JCM 9628 / NBRC 100126 / VC-16) protein is Triosephosphate isomerase.